Consider the following 367-residue polypeptide: Mitogen-activated protein kinase 12 (367 aa).

The region spanning 27 to 311 (YQDLQPVGSG…AAEALAHPYF (285 aa)) is the Protein kinase domain. Residues 33-41 (VGSGAYGAV) and Lys-56 contribute to the ATP site. Asp-153 serves as the catalytic Proton acceptor. Residue Thr-183 is modified to Phosphothreonine; by MAP2K3 and MAP2K6. Positions 183 to 185 (TGY) match the TXY motif. Tyr-185 is subject to Phosphotyrosine; by MAP2K3 and MAP2K6.

This sequence belongs to the protein kinase superfamily. CMGC Ser/Thr protein kinase family. MAP kinase subfamily. As to quaternary structure, monomer. Interacts with the PDZ domain of the syntrophin SNTA1. Interacts with LIN7C, SCRIB, SYNJ2BP and SH3BP5. Interacts with PTPN4; this interaction induces the activation of PTPN4 phosphatase activity. It depends on Mg(2+) as a cofactor. In terms of processing, dually phosphorylated on Thr-183 and Tyr-185 by MAP2K3/MKK3 and MAP2K6/MKK6, which activates the enzyme. Post-translationally, ubiquitinated. Ubiquitination leads to degradation by the proteasome pathway. In terms of tissue distribution, highly expressed in skeletal muscle, lung and testes and also in the heart and thymus of both adult and neonatal rats.

It is found in the cytoplasm. Its subcellular location is the nucleus. The protein resides in the mitochondrion. It catalyses the reaction L-seryl-[protein] + ATP = O-phospho-L-seryl-[protein] + ADP + H(+). It carries out the reaction L-threonyl-[protein] + ATP = O-phospho-L-threonyl-[protein] + ADP + H(+). With respect to regulation, activated by phosphorylation on threonine and tyrosine. MAP2K3/MKK3 and MAP2K6/MKK6 are both essential for the activation of MAPK12 induced by environmental stress, whereas MAP2K6/MKK6 is the major MAPK12 activator in response to TNF-alpha. In terms of biological role, serine/threonine kinase which acts as an essential component of the MAP kinase signal transduction pathway. MAPK12 is one of the four p38 MAPKs which play an important role in the cascades of cellular responses evoked by extracellular stimuli such as pro-inflammatory cytokines or physical stress leading to direct activation of transcription factors such as ELK1 and ATF2. Accordingly, p38 MAPKs phosphorylate a broad range of proteins and it has been estimated that they may have approximately 200 to 300 substrates each. Some of the targets are downstream kinases such as MAPKAPK2, which are activated through phosphorylation and further phosphorylate additional targets. Plays a role in myoblast differentiation and also in the down-regulation of cyclin D1 in response to hypoxia in adrenal cells suggesting MAPK12 may inhibit cell proliferation while promoting differentiation. Phosphorylates DLG1. Following osmotic shock, MAPK12 in the cell nucleus increases its association with nuclear DLG1, thereby causing dissociation of DLG1-SFPQ complexes. This function is independent of its catalytic activity and could affect mRNA processing and/or gene transcription to aid cell adaptation to osmolarity changes in the environment. Regulates UV-induced checkpoint signaling and repair of UV-induced DNA damage and G2 arrest after gamma-radiation exposure. MAPK12 is involved in the regulation of SLC2A1 expression and basal glucose uptake in L6 myotubes; and negatively regulates SLC2A4 expression and contraction-mediated glucose uptake in adult skeletal muscle. C-Jun (JUN) phosphorylation is stimulated by MAPK14 and inhibited by MAPK12, leading to a distinct AP-1 regulation. MAPK12 is required for the normal kinetochore localization of PLK1, prevents chromosomal instability and supports mitotic cell viability. MAPK12-signaling is also positively regulating the expansion of transient amplifying myogenic precursor cells during muscle growth and regeneration. This Rattus norvegicus (Rat) protein is Mitogen-activated protein kinase 12 (Mapk12).